A 440-amino-acid chain; its full sequence is Golgi-associated RAB2 interactor protein 2 (440 aa).

This sequence belongs to the GARIN family. Interacts with CALM1. As to expression, expressed in testis (at protein level).

Its subcellular location is the cell projection. The protein localises to the cilium. It is found in the flagellum. Seems to play a role in sperm motility. The chain is Golgi-associated RAB2 interactor protein 2 from Mus musculus (Mouse).